Here is a 196-residue protein sequence, read N- to C-terminus: Heat shock protein beta-8 (196 aa).

2 positions are modified to phosphoserine: serine 24 and serine 57. Threonine 63 is modified (phosphothreonine; by PKC; in vitro). 2 positions are modified to asymmetric dimethylarginine: arginine 71 and arginine 78. Residues 74–185 (TATARFGVPA…TFGESSFNNE (112 aa)) form the sHSP domain. The interval 176 to 196 (TFGESSFNNELPQDSQEVTCT) is disordered. A compositionally biased stretch (polar residues) spans 177–196 (FGESSFNNELPQDSQEVTCT).

It belongs to the small heat shock protein (HSP20) family. Monomer. Forms a ternary complex with BAG3 and HSPA1A. Component of the chaperone-assisted selective autophagy (CASA) complex consisting of BAG3, HSPA8/HSC70, HSPB8 and STUB1/CHIP. Interacts with HSPB1. Interacts with DNAJB6. Interacts with BAG3. Predominantly expressed in skeletal muscle and heart.

The protein resides in the cytoplasm. It is found in the nucleus. Functionally, involved in the chaperone-assisted selective autophagy (CASA), a crucial process for protein quality control, particularly in mechanical strained cells and tissues such as muscle. Displays temperature-dependent chaperone activity. The polypeptide is Heat shock protein beta-8 (HSPB8) (Homo sapiens (Human)).